The chain runs to 714 residues: Polyribonucleotide nucleotidyltransferase (714 aa).

Positions 490 and 496 each coordinate Mg(2+). The KH domain occupies 556–615 (PRIETMQIPTDKIREVIGSGGKVIREIVEVSGAKVDINDDGIIKIASPNGDSIKKAYDMI). The region spanning 625–693 (GQVYTGKVVK…DRGKVRLSMK (69 aa)) is the S1 motif domain.

This sequence belongs to the polyribonucleotide nucleotidyltransferase family. Requires Mg(2+) as cofactor.

The protein resides in the cytoplasm. The enzyme catalyses RNA(n+1) + phosphate = RNA(n) + a ribonucleoside 5'-diphosphate. In terms of biological role, involved in mRNA degradation. Catalyzes the phosphorolysis of single-stranded polyribonucleotides processively in the 3'- to 5'-direction. The protein is Polyribonucleotide nucleotidyltransferase of Ruegeria pomeroyi (strain ATCC 700808 / DSM 15171 / DSS-3) (Silicibacter pomeroyi).